Consider the following 483-residue polypeptide: MMAAAPIQQNGTHTGVPIDLDPPDSRKRPLEAPPEAGSTKRTNTGEDGQYFLKVLIPSYAAGSIIGKGGQTIVQLQKETGATIKLSKSKDFYPGTTERVCLIQGTVEALNAVHGFIAEKIREMPQNVAKTEPVSILQPQTTVNPDRIKQVKIIVPNSTAGLIIGKGGATVKAIMEQSGAWVQLSQKPDGINLQERVVTVSGEPEQNRKAVELIIQKIQEDPQSGSCLNISYANVTGPVANSNPTGSPYANTAEVLPTAAAAAGLLGHANLAGVAAFPAVLSGFTGNDLVAITSALNTLASYGYNLNTLGLGLSQAAATGALAAAAASANPAAAAANLLATYASEASASGSTAGGTAGTFALGSLAAATAATNGYFGAASPLAASAILGTEKSTDGSKDVVEIAVPENLVGAILGKGGKTLVEYQELTGARIQISKKGEFVPGTRNRKVTITGTPAATQAAQYLITQRITYEQGVRAANPQKVG.

The segment at 1-44 (MMAAAPIQQNGTHTGVPIDLDPPDSRKRPLEAPPEAGSTKRTNT) is disordered. Positions 27–43 (KRPLEAPPEAGSTKRTN) match the Bipartite nuclear localization signal motif. KH domains are found at residues 49 to 116 (QYFL…HGFI), 147 to 213 (IKQV…VELI), and 397 to 464 (KDVV…QYLI). Positions 395-479 (GSKDVVEIAV…YEQGVRAANP (85 aa)) are required for RNA binding.

Interacts with PTBP2; the interaction is direct.

The protein resides in the nucleus. Functions to regulate alternative splicing in neurons by binding pre-mRNA in a sequence-specific manner to activate exon inclusion or exclusion. It binds specifically to the sequences 5'-YCAY-3' and regulates splicing in only a subset of regulated exons. Binding to an exonic 5'-YCAY-3' cluster changes the protein complexes assembled on pre-mRNA, blocking U1 snRNP binding and exon inclusion, whereas binding to an intronic 5'-YCAY-3' cluster enhances spliceosome assembly and exon inclusion. Binding to 5'-YCAY-3' clusters results in a local and asymmetric action to regulate spliceosome assembly and alternative splicing in neurons. Binding to an exonic 5'-YCAY-3' cluster changed the protein complexes assembled on pre-mRNA, blocking U1 snRNP (small nuclear ribonucleoprotein) binding and exon inclusion, whereas binding to an intronic 5'-YCAY-3' cluster enhanced spliceosome assembly and exon inclusion. With NOVA1, they perform unique biological functions in different brain areas and cell types. Autoregulates its own expression by acting as a splicing repressor. Acts to activate the inclusion of exon E3A in the glycine receptor alpha-2 chain and of exon E9 in gamma-aminobutyric-acid receptor gamma-2 subunit via a distal downstream UCAU-rich intronic splicing enhancer. Acts to regulate a novel glycine receptor alpha-2 chain splice variant (alpha-2N) in developing spinal cord. The protein is RNA-binding protein Nova-1 (NOVA1) of Macaca fascicularis (Crab-eating macaque).